Reading from the N-terminus, the 61-residue chain is Small ribosomal subunit protein uS14 (61 aa).

Positions 24, 27, 40, and 43 each coordinate Zn(2+).

This sequence belongs to the universal ribosomal protein uS14 family. Zinc-binding uS14 subfamily. Part of the 30S ribosomal subunit. Contacts proteins S3 and S10. The cofactor is Zn(2+).

Functionally, binds 16S rRNA, required for the assembly of 30S particles and may also be responsible for determining the conformation of the 16S rRNA at the A site. The chain is Small ribosomal subunit protein uS14 from Mycoplasmopsis agalactiae (strain NCTC 10123 / CIP 59.7 / PG2) (Mycoplasma agalactiae).